Reading from the N-terminus, the 366-residue chain is UDP-N-acetylenolpyruvoylglucosamine reductase (366 aa).

Residues 27–197 (LGGPAAGFVV…LRVRFLLRDG (171 aa)) enclose the FAD-binding PCMH-type domain. Residue Arg-175 is part of the active site. Ser-252 functions as the Proton donor in the catalytic mechanism. The active site involves Glu-358.

This sequence belongs to the MurB family. The cofactor is FAD.

Its subcellular location is the cytoplasm. The enzyme catalyses UDP-N-acetyl-alpha-D-muramate + NADP(+) = UDP-N-acetyl-3-O-(1-carboxyvinyl)-alpha-D-glucosamine + NADPH + H(+). It functions in the pathway cell wall biogenesis; peptidoglycan biosynthesis. Cell wall formation. The sequence is that of UDP-N-acetylenolpyruvoylglucosamine reductase from Saccharopolyspora erythraea (strain ATCC 11635 / DSM 40517 / JCM 4748 / NBRC 13426 / NCIMB 8594 / NRRL 2338).